We begin with the raw amino-acid sequence, 334 residues long: DNA-directed RNA polymerase subunit alpha (334 aa).

Positions Met1–Gln234 are alpha N-terminal domain (alpha-NTD). The segment at Ile248–Gly334 is alpha C-terminal domain (alpha-CTD).

The protein belongs to the RNA polymerase alpha chain family. As to quaternary structure, homodimer. The RNAP catalytic core consists of 2 alpha, 1 beta, 1 beta' and 1 omega subunit. When a sigma factor is associated with the core the holoenzyme is formed, which can initiate transcription.

The enzyme catalyses RNA(n) + a ribonucleoside 5'-triphosphate = RNA(n+1) + diphosphate. In terms of biological role, DNA-dependent RNA polymerase catalyzes the transcription of DNA into RNA using the four ribonucleoside triphosphates as substrates. In Thioalkalivibrio sulfidiphilus (strain HL-EbGR7), this protein is DNA-directed RNA polymerase subunit alpha.